A 241-amino-acid chain; its full sequence is Urease accessory protein UreF 1 (241 aa).

It belongs to the UreF family. As to quaternary structure, ureD, UreF and UreG form a complex that acts as a GTP-hydrolysis-dependent molecular chaperone, activating the urease apoprotein by helping to assemble the nickel containing metallocenter of UreC. The UreE protein probably delivers the nickel.

The protein resides in the cytoplasm. Functionally, required for maturation of urease via the functional incorporation of the urease nickel metallocenter. This is Urease accessory protein UreF 1 from Brucella melitensis biotype 1 (strain ATCC 23456 / CCUG 17765 / NCTC 10094 / 16M).